We begin with the raw amino-acid sequence, 334 residues long: MATRQRESSITSCCSTSSCDADDEGVRGTCEDASLCKRFAVSIGYWHDPYIQHFVRLSKERKAPEINRGYFARVHGVSQLIKAFLRKTECHCQIVNLGAGMDTTFWRLKDEDLLPSKYFEVDFPMIVTRKLHSIKCKPPLSSPILELHSEDTLQMDGHILDSKRYAVIGADLRDLSELEEKLKKCNMNTQLPTLLIAECVLVYMTPEQSANLLKWAANSFERAMFINYEQVNMGDRFGQIMIENLRRRQCDLAGVETCKSLESQKERLLSNGWETASAVDMMELYNRLPRAEVSRIESLEFLDEMELLEQLMRHYCLCWATKGGNELGLKEITY.

Residues Lys37, Arg73, Gly98, Asp122, 171-172 (DL), and Glu198 each bind S-adenosyl-L-methionine.

Belongs to the methyltransferase superfamily. LCMT family.

The enzyme catalyses [phosphatase 2A protein]-C-terminal L-leucine + S-adenosyl-L-methionine = [phosphatase 2A protein]-C-terminal L-leucine methyl ester + S-adenosyl-L-homocysteine. In terms of biological role, methylates the carboxyl group of the C-terminal leucine residue of protein phosphatase 2A catalytic subunits to form alpha-leucine ester residues. The polypeptide is Leucine carboxyl methyltransferase 1 (LCMT1) (Homo sapiens (Human)).